The chain runs to 187 residues: Ribosome-recycling factor (187 aa).

It belongs to the RRF family.

It localises to the cytoplasm. Responsible for the release of ribosomes from messenger RNA at the termination of protein biosynthesis. May increase the efficiency of translation by recycling ribosomes from one round of translation to another. The protein is Ribosome-recycling factor of Methylobacterium sp. (strain 4-46).